A 689-amino-acid chain; its full sequence is SH3 domain-binding protein 1 (689 aa).

The segment covering 1–11 (MMKRQLHRMRQ) has biased composition (basic residues). Residues 1-24 (MMKRQLHRMRQLAHTGSSGRTPET) are disordered. Residues 1-275 (MMKRQLHRMR…TAAPFSRVYG (275 aa)) form an interaction with CGNL1 region. The BAR domain maps to 17–262 (SSGRTPETAE…RDNHSQADSS (246 aa)). Ser241 and Ser262 each carry phosphoserine. The Rho-GAP domain occupies 276-469 (VSLRTHLQDL…VLIQNADTLF (194 aa)). The tract at residues 470–689 (PGDINFSVSG…RPRGLISETD (220 aa)) is interaction with CD2AP. The disordered stretch occupies residues 507 to 689 (TAATPTPTPA…RPRGLISETD (183 aa)). A phosphoserine mark is found at Ser539 and Ser545. Residues 565–575 (PARPTMPPPQP) are compositionally biased toward pro residues. Over residues 576–594 (SSSRSSPPALSLPAGSVSP) the composition is skewed to low complexity. Residue Ser586 is modified to Phosphoserine. Position 596 is a phosphothreonine (Thr596). An SH3-binding motif is present at residues 611–620 (APTVPPPLPP). A compositionally biased stretch (pro residues) spans 613 to 625 (TVPPPLPPAPPQP). Phosphoserine is present on Ser641. Residues 670–680 (PPTPVLPPQPR) show a composition bias toward pro residues.

In terms of assembly, interacts with RAC1. Interacts with the exocyst via EXOC4 and EXOC8; required for the localization of both SH3BP1 and the exocyst to the leading edge of migrating cells. Interacts with CD2AP and CGNL1; probably part of a complex at cell junctions. Interacts with CAPZA1; recruits CAPZA1 to forming cell junctions. May interact with AFDN. Interacts with PLXND1; they dissociate upon SEMA3E binding to PLXND1 allowing SH3BP1 to transduce downstream signal through RAC1 inactivation. Interacts with ABL1, GRB2 and SRC (via SH3 domain).

The protein localises to the cell projection. It is found in the cell junction. Its subcellular location is the tight junction. It localises to the adherens junction. The protein resides in the phagocytic cup. The protein localises to the nucleus. It is found in the cytoplasm. Its subcellular location is the cytosol. Functionally, GTPase activating protein/GAP which specifically converts GTP-bound Rho-type GTPases including RAC1 and CDC42 in their inactive GDP-bound form. By specifically inactivating RAC1 at the leading edge of migrating cells, it regulates the spatiotemporal organization of cell protrusions which is important for proper cell migration. Also negatively regulates CDC42 in the process of actin remodeling and the formation of epithelial cell junctions. Through its GAP activity toward RAC1 and/or CDC42 plays a specific role in phagocytosis of large particles. Specifically recruited by a PI3 kinase/PI3K-dependent mechanism to sites of large particles engagement, inactivates RAC1 and/or CDC42 allowing the reorganization of the underlying actin cytoskeleton required for engulfment. It also plays a role in angiogenesis and the process of repulsive guidance as part of a semaphorin-plexin signaling pathway. Following the binding of PLXND1 to extracellular SEMA3E it dissociates from PLXND1 and inactivates RAC1, inducing the intracellular reorganization of the actin cytoskeleton and the collapse of cells. The polypeptide is SH3 domain-binding protein 1 (Rattus norvegicus (Rat)).